We begin with the raw amino-acid sequence, 269 residues long: 4-hydroxy-tetrahydrodipicolinate reductase (269 aa).

9–14 (GVAGRM) provides a ligand contact to NAD(+). Arg-36 is an NADP(+) binding site. NAD(+) contacts are provided by residues 99–101 (GTT) and 123–126 (APNM). The Proton donor/acceptor role is filled by His-156. A (S)-2,3,4,5-tetrahydrodipicolinate-binding site is contributed by His-157. The Proton donor role is filled by Lys-160. (S)-2,3,4,5-tetrahydrodipicolinate is bound at residue 166 to 167 (GT).

The protein belongs to the DapB family.

Its subcellular location is the cytoplasm. It catalyses the reaction (S)-2,3,4,5-tetrahydrodipicolinate + NAD(+) + H2O = (2S,4S)-4-hydroxy-2,3,4,5-tetrahydrodipicolinate + NADH + H(+). It carries out the reaction (S)-2,3,4,5-tetrahydrodipicolinate + NADP(+) + H2O = (2S,4S)-4-hydroxy-2,3,4,5-tetrahydrodipicolinate + NADPH + H(+). The protein operates within amino-acid biosynthesis; L-lysine biosynthesis via DAP pathway; (S)-tetrahydrodipicolinate from L-aspartate: step 4/4. Its function is as follows. Catalyzes the conversion of 4-hydroxy-tetrahydrodipicolinate (HTPA) to tetrahydrodipicolinate. This Methylococcus capsulatus (strain ATCC 33009 / NCIMB 11132 / Bath) protein is 4-hydroxy-tetrahydrodipicolinate reductase.